Here is a 118-residue protein sequence, read N- to C-terminus: Elicitin (118 aa).

An N-terminal signal peptide occupies residues M1–A20. Cystine bridges form between C23-C91, C47-C76, and C71-C115.

Belongs to the elicitin family.

It is found in the secreted. Induces local and distal defense responses (incompatible hypersensitive reaction) in plants from the solanaceae and cruciferae families. Elicits leaf necrosis and causes the accumulation of pathogenesis-related proteins. Might interact with the lipidic molecules of the plasma membrane. This is Elicitin (PARA1) from Phytophthora nicotianae (Potato buckeye rot agent).